The following is a 2134-amino-acid chain: MSSTPGLPTPGASLALRVSFVDVHPEVIPVQLWGLVGQRREEYVRLSREIQEAAATRGPWALGGASASPGELCLVQVGLMWHRCRVVSRQAQDSRVFLLDEGRTITAGAGSLAPGRSEFFHLPSEVLGCVLAGLVPAGGGGTGGGEPQQWSPRAVDFLSNLQGKEVHGRVLDVLLLHRLVLLEVPVVSQQMEELGLARQVPDSLFCSLLKRYLTAAGQGSSGAPVLPRAAPKQEHPGLDYFYPQLQLGVTEPVVVTQVCHPHRIHCQLRSLSQEIHRLSESMAQVYRAPVGTDDEDSGSATWEEREESPDKPGSPCASCGLDGQWYRALLLETFRPQRCAQVLHVDYGRKELVSCSSLRYLLPEYFRMPVVTYPCALYGLWDCGRGWSRSQVGDLKALILGQAVNAKIEFYCSFEHMYYVTLYGEDGINLNSAFGVQSCCLADWFLQSQGIEEEEEEDEDEVEAAFQSQSPAEEMEAEVSLPSLRSIRLKMNTFYDAQVEFVKSPSEFWIRLRKHKNTFSKLTKRMCSFYSSASKLDGVILRPEPDDLCCVKWKENGYYRATVTRLDSKSVDVFLVDRGNSENVDWCDVRMLLPQFRQLPILALKCTLADIWPLGKTWSQEATSFFKKTVLHKELVVHVLDKQDHQYVIEILDESRMGEENISKVIAQAGFAKFQEFETKENIRLSAHSPGHVSGHFMAEPSKITSAKKAEGDQRAKKDNKTLSVSEALADTVSLSNLSTAQDTEKVTSDPSLLMLNFLKTKPDCCGKGELEVGSTVEVKVSHIENPGSFWCQLMRNAQGFRTLMCDIEDYCKSSEPSPYEGDTRVCLAKRTASGRWSRALISGAHSLEHVRVVFVDYGDRDVVSTKDILSVSDVFFQVRAQAFRCSLYNLIQPMGENPFVWDEKAVQAFSGFIDSARQNNLELKCTVFALASRHEEEWFNVVDLLTPFQSACRFLVEKRLARPVKHQKPLEPSVQLHSYYYSTHDLKIGSEELVYVTHADDPWTFYCQLARNINVLEQLSYNIMQLSKALLNLKASTLAPGTLCLARYTDGNWYRGIIIEKEPSKVFFVDFGNTYIAVDHLLPIPRDAHDVLLLPMQALKCSLSDIPHHIPEEVTAWFQETVLDKSLKALVVAKDPDGRLIIELYDDSVQINASINEKLGLLGYKNRTRRKEKENEIILHETKALEDKKESVKPSLADYLGKPGESKAHSIEIMGESCKPKMGPACKELRYLQGSAKANLVPPYQDSVGNKNDGGFPLTREKKEDIFASSPMSGTKLDSALPERRMGEPSGRDLPPKFCEFPQKTIAPGFKTSVYVSHINDLSDFYIQLIEDEAEINNLSERLNDVRTRPQYHTGPQWQSGDVICAVFPEDNLWYRALVMEQQPNGLLSVQFIDYGNMSVVHTNRTGRLGPVDAVLPALCLHCSLWGLSVPVCKEMVSYFSQRTDEAQIRCEFVKFQGTWEVILADEHGVIAEDMISRFPCNGNSQAGLTTQTMKGDCLKIANKPNTDTSVLLNWYNPKAKLIKAYATVIDGPEYFWCQFADSEKLQYLETEVQSAGKQLSDRRSCTQCPQIGDPCIVRYREDGHYYRALITNICDGELASVRLVDFGNAEDCVDAKELWSIPSELLLVPMQAFPCCLAGFSVSGGVCPQEGNDYFYDIVTEDVLDITILEIKRDVCNIPLAIVELRSKGENINEKMKKYAKTGVPKNDLSSEKRGPERKGSLASPDLGLKKPSHKIAQDKTFYGEARASELSERLEKDLNIETKTSKFYERSTRSIFNAFENSCKGKMGSERLEGSMDYHFVDRAKFDNNYLITGFNPILAHASEPKELLELSSLEVPLSADNDDECKEFLELESIELQHSPAGEEEKEELGLGSPMAPLSPGCQAGATLESFMMQLPLDCEAEKQLELKLPTPQLSLEDSISPLSAAVSQDIQGSRCSEDERKAGYMGSSDDDHSRSPLLQHGKGGNSPAHDGRNLSEEEFPQFESRDSAALLAPLFSEEEAREGRKCGSMVPAQLQSTYTLKGFSVGSKCVVWSSLRNTWSKCEILELAEEGTRVLNLSNGVEETVSPENVWNGIPKVDKRPSEAVFQTVGKDLPFMPSDDATTKGFSSVSEEEACGGDADSLSTAKLNI.

A disordered region spans residues Arg287 to Pro315. Position 292 is a phosphothreonine (Thr292). Tudor domains lie at Pro309–Met368, Arg542–Leu599, Tyr820–Val879, and Thr1038–Val1092. The interval Ser1271–Pro1296 is disordered. Residues Leu1282 to Pro1296 are compositionally biased toward basic and acidic residues. Tudor domains follow at residues Gln1358–Leu1417 and Cys1570–Val1630. Disordered regions lie at residues Lys1699–Lys1733 and Leu1860–Gly1885. The segment covering Leu1711–Gly1722 has biased composition (basic and acidic residues). Residues Ser1723 and Ser1726 each carry the phosphoserine modification. The residue at position 1925 (Ser1925) is a Phosphoserine. Residues Ala1930–Arg1939 show a composition bias toward polar residues. Residues Ala1930 to Pro1985 are disordered. Residues Ser1980, Ser2063, and Ser2115 each carry the phosphoserine modification.

As to quaternary structure, found in a mRNP complex (i.e. messenger ribonucleoproteins which correspond to mRNA with bound proteins), at least composed of TDRD1, TDRD6, TDRD7 and DDX4. Found in a complex, at least composed of PIWIL1, PIWIL2, DDX4 and TDRD6. Interacts with Tex19.1 and probably Tex19.2. Interacts with PRMT5. Interacts with SNRPB (when methylated); to trigger spliceosome formation. In terms of processing, undergoes proteolytic cleavage near the C-terminal by an unknown protease during the transition from meiosis I to meiosis II in primary spermatocytes. In terms of tissue distribution, testis specific. Expressed in primary spermatocytes at post natal (PN) day 17.5. Expressed in midpachytene stage of primary spermatocytes at PN16 and in round spermatids at PN22 (at protein level).

The protein localises to the cytoplasm. Its function is as follows. Tudor domain-containing protein involved in germ cell development, more specifically the formation of chromatoid body (during spermiogenesis), Balbiani body (during oogenesis), germ plasm (upon fertilization), and for proper miRNA expression and spliceosome maturation. Essential for RNA-dependent helicase UPF1 localization to chromatoid body, for UPF1-UPF2 and UPF1-DDX4 interactions which are required for mRNA degradation, using the extended 3' UTR-triggered nonsense-mediated mRNA decay (NMD) pathway. Involved in spliceosome maturation and mRNA splicing in prophase I spermatocytes through interaction with arginine N-methyltransferase PRMT5 and symmetrically arginine dimethylated SNRPB (small nuclear ribonucleoprotein-associated protein). This is Tudor domain-containing protein 6 from Mus musculus (Mouse).